Reading from the N-terminus, the 210-residue chain is Ribosomal RNA large subunit methyltransferase E (210 aa).

The S-adenosyl-L-methionine site is built by Gly60, Trp62, Asp80, Asp96, and Asp122. Catalysis depends on Lys162, which acts as the Proton acceptor.

Belongs to the class I-like SAM-binding methyltransferase superfamily. RNA methyltransferase RlmE family.

The protein resides in the cytoplasm. The enzyme catalyses uridine(2552) in 23S rRNA + S-adenosyl-L-methionine = 2'-O-methyluridine(2552) in 23S rRNA + S-adenosyl-L-homocysteine + H(+). Functionally, specifically methylates the uridine in position 2552 of 23S rRNA at the 2'-O position of the ribose in the fully assembled 50S ribosomal subunit. The chain is Ribosomal RNA large subunit methyltransferase E from Dichelobacter nodosus (strain VCS1703A).